We begin with the raw amino-acid sequence, 233 residues long: Attacin-B (233 aa).

The first 17 residues, 1–17, serve as a signal peptide directing secretion; sequence MFAKLFLVSVLLVGVNS. The propeptide occupies 18 to 46; sequence RYVLVEEPGYYDKQYEEQPQQWVNSRVRR.

This sequence belongs to the attacin/sarcotoxin-2 family.

It localises to the secreted. Functionally, hemolymph antibacterial protein. The protein is Attacin-B of Hyalophora cecropia (Cecropia moth).